The following is a 302-amino-acid chain: Mas-related G-protein coupled receptor member A3 (302 aa).

The Extracellular portion of the chain corresponds to 1 to 17; sequence MNETIPGSIDIETLIPD. A glycan (N-linked (GlcNAc...) asparagine) is linked at Asn-2. Residues 18-38 form a helical membrane-spanning segment; sequence LMIIIFGLVGLTGNAIVFWLL. The Cytoplasmic portion of the chain corresponds to 39–46; the sequence is GFRMHRTA. Residues 47–67 form a helical membrane-spanning segment; it reads FLVYILNLALADFLFLLCHII. Asn-68 carries N-linked (GlcNAc...) asparagine glycosylation. The Extracellular segment spans residues 68–81; sequence NSTVDLLKFTLPKG. The helical transmembrane segment at 82–102 threads the bilayer; sequence IFAFCFHTIKRVLYITGLSML. Topologically, residues 103-129 are cytoplasmic; sequence SAISTERCLSVLCPIWYHCRRPEHTST. The helical transmembrane segment at 130-150 threads the bilayer; the sequence is VMCAVIWVLSLLICILDGYFC. At 151-167 the chain is on the extracellular side; that stretch reads GYLDNHYFNYSVCQAWD. Asn-159 is a glycosylation site (N-linked (GlcNAc...) asparagine). A helical membrane pass occupies residues 168-188; the sequence is IFIGAYLMFLFVVLCLSTLAL. The Cytoplasmic portion of the chain corresponds to 189-211; it reads LARLFCGARNMKFTRLFVTIMLT. Residues 212–232 form a helical membrane-spanning segment; sequence VLVFLLCGLPWGITWFLLFWI. The Extracellular segment spans residues 233–242; it reads APGVFVLDYS. The helical transmembrane segment at 243 to 263 threads the bilayer; it reads PLLVLTAINSCANPIIYFFVG. Over 264–302 the chain is Cytoplasmic; the sequence is SFRQRLNKQTLKMVLQKALQDTPETPENMVEMSRNKAEP.

This sequence belongs to the G-protein coupled receptor 1 family. Mas subfamily. In terms of tissue distribution, expressed exclusively in dorsal root ganglia and nodose ganglia. Expressed in a subset of sensory neurons that includes nociceptors. Expressed in the subclass of non-peptidergic sensory neurons that are IB4(+) and VR1(-).

It is found in the cell membrane. Its function is as follows. Orphan receptor. May be a receptor for RFamide-family neuropeptides such as NPFF and NPAF, which are analgesic in vivo. May regulate nociceptor function and/or development, including the sensation or modulation of pain. Activated by the antimalarial drug chloroquine. Mediates chloroquine-induced itch, in a histamine-independent manner. In Mus musculus (Mouse), this protein is Mas-related G-protein coupled receptor member A3 (Mrgpra3).